Consider the following 172-residue polypeptide: Large ribosomal subunit protein uL10 (172 aa).

It belongs to the universal ribosomal protein uL10 family. As to quaternary structure, part of the ribosomal stalk of the 50S ribosomal subunit. The N-terminus interacts with L11 and the large rRNA to form the base of the stalk. The C-terminus forms an elongated spine to which L12 dimers bind in a sequential fashion forming a multimeric L10(L12)X complex.

Functionally, forms part of the ribosomal stalk, playing a central role in the interaction of the ribosome with GTP-bound translation factors. The chain is Large ribosomal subunit protein uL10 from Pelodictyon phaeoclathratiforme (strain DSM 5477 / BU-1).